A 512-amino-acid chain; its full sequence is D-alanine--D-alanyl carrier protein ligase (512 aa).

Position 152–153 (152–153 (TS)) interacts with ATP. Aspartate 199 contributes to the D-alanine binding site. 294–299 (NAYGPT) contacts ATP. Residue valine 303 participates in D-alanine binding. ATP is bound by residues aspartate 385, 397 to 400 (YGGR), and lysine 499. Lysine 499 contacts D-alanine.

The protein belongs to the ATP-dependent AMP-binding enzyme family. DltA subfamily.

Its subcellular location is the cytoplasm. The enzyme catalyses holo-[D-alanyl-carrier protein] + D-alanine + ATP = D-alanyl-[D-alanyl-carrier protein] + AMP + diphosphate. It participates in cell wall biogenesis; lipoteichoic acid biosynthesis. In terms of biological role, catalyzes the first step in the D-alanylation of lipoteichoic acid (LTA), the activation of D-alanine and its transfer onto the D-alanyl carrier protein (Dcp) DltC. In an ATP-dependent two-step reaction, forms a high energy D-alanyl-AMP intermediate, followed by transfer of the D-alanyl residue as a thiol ester to the phosphopantheinyl prosthetic group of the Dcp. D-alanylation of LTA plays an important role in modulating the properties of the cell wall in Gram-positive bacteria, influencing the net charge of the cell wall. The chain is D-alanine--D-alanyl carrier protein ligase from Streptococcus pyogenes serotype M49 (strain NZ131).